The following is a 307-amino-acid chain: Transmembrane and coiled-coil domain-containing protein 5B (307 aa).

A coiled-coil region spans residues 20–212 (TLEAIKQNLK…SKAQNDSSQV (193 aa)). The chain crosses the membrane as a helical span at residues 246-268 (YLFFMVMIVIRLLGYVFFHLQYV).

The protein belongs to the TMCO5 family.

It is found in the membrane. This chain is Transmembrane and coiled-coil domain-containing protein 5B (Tmco5b), found in Mus musculus (Mouse).